The primary structure comprises 180 residues: ATP-dependent protease subunit HslV (180 aa).

Threonine 5 is an active-site residue. Glycine 165, cysteine 168, and threonine 171 together coordinate Na(+).

It belongs to the peptidase T1B family. HslV subfamily. As to quaternary structure, a double ring-shaped homohexamer of HslV is capped on each side by a ring-shaped HslU homohexamer. The assembly of the HslU/HslV complex is dependent on binding of ATP.

The protein resides in the cytoplasm. The catalysed reaction is ATP-dependent cleavage of peptide bonds with broad specificity.. With respect to regulation, allosterically activated by HslU binding. Functionally, protease subunit of a proteasome-like degradation complex believed to be a general protein degrading machinery. In Helicobacter hepaticus (strain ATCC 51449 / 3B1), this protein is ATP-dependent protease subunit HslV.